A 469-amino-acid chain; its full sequence is UDP-N-acetylmuramoylalanine--D-glutamate ligase (469 aa).

123 to 129 is a binding site for ATP; it reads GTNGKST.

This sequence belongs to the MurCDEF family.

The protein localises to the cytoplasm. The enzyme catalyses UDP-N-acetyl-alpha-D-muramoyl-L-alanine + D-glutamate + ATP = UDP-N-acetyl-alpha-D-muramoyl-L-alanyl-D-glutamate + ADP + phosphate + H(+). It participates in cell wall biogenesis; peptidoglycan biosynthesis. In terms of biological role, cell wall formation. Catalyzes the addition of glutamate to the nucleotide precursor UDP-N-acetylmuramoyl-L-alanine (UMA). The sequence is that of UDP-N-acetylmuramoylalanine--D-glutamate ligase from Phenylobacterium zucineum (strain HLK1).